The following is a 374-amino-acid chain: Guanine nucleotide-binding protein subunit alpha-15 (374 aa).

Residues 41–374 (EELKLLLLGP…ARYLDEINLL (334 aa)) form the G-alpha domain. The tract at residues 44-57 (KLLLLGPGESGKST) is G1 motif. Residues 49 to 56 (GPGESGKS), 183 to 189 (LRSRMPT), 208 to 212 (DVGGQ), 277 to 280 (NKTD), and alanine 346 contribute to the GTP site. Mg(2+)-binding residues include serine 56 and threonine 189. A G2 motif region spans residues 181–189 (DVLRSRMPT). A G3 motif region spans residues 204 to 213 (LRIVDVGGQR). Residues 273–280 (ILFLNKTD) are G4 motif. Residues 344–349 (TCATDT) are G5 motif.

Belongs to the G-alpha family. G(q) subfamily. G proteins are composed of 3 units; alpha, beta and gamma. The alpha chain contains the guanine nucleotide binding site. In terms of tissue distribution, expressed primarily in hematopoietic cells. Coexpressed with EDG6 at the same relative levels in all tissues examined, with the highest levels in adult spleen and lung.

Guanine nucleotide-binding proteins (G proteins) are involved as modulators or transducers in various transmembrane signaling systems. This chain is Guanine nucleotide-binding protein subunit alpha-15 (Gna15), found in Mus musculus (Mouse).